Reading from the N-terminus, the 443-residue chain is Thymidine phosphorylase (443 aa).

Belongs to the thymidine/pyrimidine-nucleoside phosphorylase family. As to quaternary structure, homodimer.

It catalyses the reaction thymidine + phosphate = 2-deoxy-alpha-D-ribose 1-phosphate + thymine. It functions in the pathway pyrimidine metabolism; dTMP biosynthesis via salvage pathway; dTMP from thymine: step 1/2. In terms of biological role, the enzymes which catalyze the reversible phosphorolysis of pyrimidine nucleosides are involved in the degradation of these compounds and in their utilization as carbon and energy sources, or in the rescue of pyrimidine bases for nucleotide synthesis. The polypeptide is Thymidine phosphorylase (Shewanella halifaxensis (strain HAW-EB4)).